Here is a 364-residue protein sequence, read N- to C-terminus: Putative agmatine deiminase 1 (364 aa).

Cysteine 356 acts as the Amidino-cysteine intermediate in catalysis.

It belongs to the agmatine deiminase family.

The enzyme catalyses agmatine + H2O = N-carbamoylputrescine + NH4(+). This Listeria monocytogenes serotype 4b (strain F2365) protein is Putative agmatine deiminase 1.